A 103-amino-acid chain; its full sequence is Large ribosomal subunit protein uL23 (103 aa).

This sequence belongs to the universal ribosomal protein uL23 family. Part of the 50S ribosomal subunit. Contacts protein L29, and trigger factor when it is bound to the ribosome.

Functionally, one of the early assembly proteins it binds 23S rRNA. One of the proteins that surrounds the polypeptide exit tunnel on the outside of the ribosome. Forms the main docking site for trigger factor binding to the ribosome. The protein is Large ribosomal subunit protein uL23 of Chlorobium luteolum (strain DSM 273 / BCRC 81028 / 2530) (Pelodictyon luteolum).